The sequence spans 2641 residues: Inverse autotransporter adhesin YeeJ (2641 aa).

The first 25 residues, 1 to 25 (MGIKLRRLTAGICLITQLVFPMAAA), serve as a signal peptide directing secretion. The LysM domain occupies 50 to 98 (VPYTLGALESAQSVAERFGISVAELRKLNQFRTFARGFDNVRQGDELDV). The interval 125 to 400 (TSQQIGSLLA…SRFDLVDRNN (276 aa)) is inverse autotransporter. Positions 513-605 (QKDSSVSLSS…GVDAAKAPAV (93 aa)) are invasin 3 domain. Big-1 domains lie at 617 to 711 (HSSI…AGFI), 721 to 815 (IATL…VSFV), 822 to 913 (QVDL…VIFI), 920 to 1017 (ALTL…MTFV), 1024 to 1116 (VVVL…VNIA), 1123 to 1220 (QVTL…VTFV), 1227 to 1319 (VVVL…VNIA), 1326 to 1423 (QVTL…VTFV), 1430 to 1523 (LVVL…VHFI), 1531 to 1633 (IIEL…SINV), 1641 to 1734 (HLTL…VTYV), 1741 to 1837 (EISL…VNFI), 1844 to 1941 (QVNL…VTLI), 1948 to 2032 (KLAS…PTEV), 2048 to 2141 (ITSL…VIDQ), 2142 to 2235 (KLTL…IVKV), and 2244 to 2336 (VASF…ITLV). Residues 2538–2641 (KSWWVNAGDA…FAYATCYKNL (104 aa)) form a C-type lectin domain region.

It belongs to the intimin/invasin family.

It localises to the cell outer membrane. Its function is as follows. A probable inverse autotransporter, it may be involved in biofilm formation and cell adhesion. May bind peptidoglycan via its LysM domain. The chain is Inverse autotransporter adhesin YeeJ (yeeJ) from Escherichia coli O157:H7.